A 758-amino-acid polypeptide reads, in one-letter code: Relaxin receptor 1 (758 aa).

At 1–408 the chain is on the extracellular side; it reads MTSGPFFFCV…LENLLASIIQ (408 aa). In terms of domain architecture, LDL-receptor class A spans 26 to 63; the sequence is SCPLGSFPCGNISKCLPQLLHCNGVDDCGNQADEDNCG. Cystine bridges form between cysteine 27–cysteine 40, cysteine 34–cysteine 53, and cysteine 47–cysteine 62. Asparagine 36 is a glycosylation site (N-linked (GlcNAc...) asparagine). 6 residues coordinate Ca(2+): leucine 45, asparagine 48, valine 50, aspartate 52, aspartate 58, and glutamate 59. LRR repeat units lie at residues 105-125, 126-148, 149-172, 173-196, 198-220, 221-244, 246-269, 270-293, 294-317, 319-341, and 342-365; these read LCRD…PSVS, SNVT…SFRK, YHDL…AFRG, LHSL…VFED, HRLE…TFYG, LNSL…PLCQ, MPRL…TFIS, CNNL…AFTH, LQKL…IFKD, KELS…QFDY, and LAKL…MFRP. The N-linked (GlcNAc...) asparagine glycan is linked to asparagine 127. N-linked (GlcNAc...) asparagine glycosylation is found at asparagine 264 and asparagine 272. Residue asparagine 325 is glycosylated (N-linked (GlcNAc...) asparagine). N-linked (GlcNAc...) asparagine glycosylation is present at asparagine 368. The chain crosses the membrane as a helical span at residues 409-429; that stretch reads RVFVWVVSAITCFGNIFVICM. Topologically, residues 430 to 443 are cytoplasmic; the sequence is RPYIRSENKLHAMS. The helical transmembrane segment at 444–464 threads the bilayer; sequence IMSLCCADCLMGVYLFVIGAF. Over 465-486 the chain is Extracellular; that stretch reads DLKFRGEYRKHAQPWMESVHCQ. An intrachain disulfide couples cysteine 485 to cysteine 563. Residues 487 to 507 traverse the membrane as a helical segment; that stretch reads FMGSLAVLSTEVSVLLLTFLT. The Cytoplasmic portion of the chain corresponds to 508–527; it reads LEKYICIVYPFRCLRPRKCR. Residues 528 to 548 form a helical membrane-spanning segment; sequence TVAVLIFIWITGFIVAFAPLG. Residues 549–577 lie on the Extracellular side of the membrane; sequence NKEFFKNYYGTNGVCFPLHSEDTGSTGAQ. The chain crosses the membrane as a helical span at residues 578 to 598; it reads IYSVVIFLGINLVAFIIIVFS. Residues 599 to 629 are Cytoplasmic-facing; that stretch reads YGSMFYSVHQSTITATEIQKQVKKEMILAKR. A helical transmembrane segment spans residues 630–650; the sequence is FFFIVFTDALCWIPIFILKFL. Residues 651–660 lie on the Extracellular side of the membrane; that stretch reads SLIRVEIPDT. A helical membrane pass occupies residues 661–681; sequence ITSWVVIFILPINSALNPIIY. Topologically, residues 682-758 are cytoplasmic; sequence TLTTRPFKEM…SRSSRLNSYS (77 aa).

This sequence belongs to the G-protein coupled receptor 1 family. Interacts with C1QTNF8. Detected in brain cortex, and at low levels in testis.

It localises to the cell membrane. Receptor for relaxins. The activity of this receptor is mediated by G proteins leading to stimulation of adenylate cyclase and an increase of cAMP. Binding of the ligand may also activate a tyrosine kinase pathway that inhibits the activity of a phosphodiesterase that degrades cAMP. The chain is Relaxin receptor 1 (Rxfp1) from Rattus norvegicus (Rat).